Consider the following 309-residue polypeptide: HPr kinase/phosphorylase (309 aa).

Residues His138 and Lys159 contribute to the active site. 153-160 serves as a coordination point for ATP; it reads GQSGVGKS. Mg(2+) is bound at residue Ser160. The active-site Proton acceptor; for phosphorylation activity. Proton donor; for dephosphorylation activity is Asp177. Residues 201-210 form an important for the catalytic mechanism of both phosphorylation and dephosphorylation region; it reads LEIRGLGIIN. Glu202 serves as a coordination point for Mg(2+). Arg243 is an active-site residue. The segment at 264-269 is important for the catalytic mechanism of dephosphorylation; it reads PVRPGR.

The protein belongs to the HPrK/P family. Homohexamer. Mg(2+) is required as a cofactor.

The enzyme catalyses [HPr protein]-L-serine + ATP = [HPr protein]-O-phospho-L-serine + ADP + H(+). It carries out the reaction [HPr protein]-O-phospho-L-serine + phosphate + H(+) = [HPr protein]-L-serine + diphosphate. Its function is as follows. Catalyzes the ATP- as well as the pyrophosphate-dependent phosphorylation of a specific serine residue in HPr, a phosphocarrier protein of the phosphoenolpyruvate-dependent sugar phosphotransferase system (PTS). HprK/P also catalyzes the pyrophosphate-producing, inorganic phosphate-dependent dephosphorylation (phosphorolysis) of seryl-phosphorylated HPr (P-Ser-HPr). The two antagonistic activities of HprK/P are regulated by several intracellular metabolites, which change their concentration in response to the absence or presence of rapidly metabolisable carbon sources (glucose, fructose, etc.) in the growth medium. Also phosphorylates/dephosphorylates the HPr-like catabolite repression protein crh on a specific serine residue. Therefore, by controlling the phosphorylation state of HPr and crh, HPrK/P is a sensor enzyme that plays a major role in the regulation of carbon metabolism and sugar transport: it mediates carbon catabolite repression (CCR), and regulates PTS-catalyzed carbohydrate uptake and inducer exclusion. This is HPr kinase/phosphorylase from Bacillus cytotoxicus (strain DSM 22905 / CIP 110041 / 391-98 / NVH 391-98).